The primary structure comprises 541 residues: Chaperonin GroEL 2 (541 aa).

ATP contacts are provided by residues 29 to 32 (TLGP) and 86 to 90 (DGTTT). Residue K132 forms an Isoglutamyl lysine isopeptide (Lys-Gln) (interchain with Q-Cter in protein Pup) linkage. ATP-binding positions include G413, 476-478 (NAA), and D492.

The protein belongs to the chaperonin (HSP60) family. In terms of assembly, forms a cylinder of 14 subunits composed of two heptameric rings stacked back-to-back. Interacts with the co-chaperonin GroES.

It localises to the secreted. Its subcellular location is the capsule. It is found in the cell surface. The protein localises to the cell wall. The enzyme catalyses ATP + H2O + a folded polypeptide = ADP + phosphate + an unfolded polypeptide.. Its function is as follows. Together with its co-chaperonin GroES, plays an essential role in assisting protein folding. The GroEL-GroES system forms a nano-cage that allows encapsulation of the non-native substrate proteins and provides a physical environment optimized to promote and accelerate protein folding. The chain is Chaperonin GroEL 2 from Mycolicibacterium smegmatis (strain ATCC 700084 / mc(2)155) (Mycobacterium smegmatis).